The following is a 456-amino-acid chain: UDP-glycosyltransferase 74D1 (456 aa).

Residues Ser-279, 332 to 334 (SPQ), 349 to 357 (HCGWNSTLE), and 371 to 374 (YSDQ) contribute to the UDP-alpha-D-glucose site.

It belongs to the UDP-glycosyltransferase family. Expressed in leaves.

Glucosyltransferase that glucosylates jasmonate (JA) and JA derivatives. Also active on indole-3-acetic acid (IAA), 4-coumrate, cinnamate and caffeate. This chain is UDP-glycosyltransferase 74D1 (UGT74D1), found in Arabidopsis thaliana (Mouse-ear cress).